A 554-amino-acid chain; its full sequence is Nuclear division defective protein 1 (554 aa).

Disordered regions lie at residues 1 to 31 and 98 to 117; these read MDRDISYQQNYTSTGATATSSRQPSTDNNAD and IQQQQQQQQQQQQQQQALGS. Residues 98-113 are compositionally biased toward low complexity; the sequence is IQQQQQQQQQQQQQQQ. T319 carries the phosphothreonine; by CDC28 modification. Disordered regions lie at residues 410–475 and 493–554; these read PTPN…GKKP and SSSS…FNSQ. The segment covering 411–427 has biased composition (polar residues); it reads TPNCNSLHSTTTGTSAL. Residues 448–465 are compositionally biased toward low complexity; that stretch reads SSSNTVSFKSKSGNNNSK. Residues 466-475 show a composition bias toward basic residues; that stretch reads GRIKKNGKKP. Residues 493–513 are compositionally biased toward low complexity; sequence SSSSLSSSLNASSSAGNSNSN. The segment covering 515–524 has biased composition (basic residues); it reads TKKRASKLKR. Positions 525 to 536 are enriched in low complexity; it reads SQSLLSDSGSKS. Polar residues predominate over residues 539–554; the sequence is RKSCNSKSNGNLFNSQ.

As to quaternary structure, forms an activator complex with FKH2. Post-translationally, phosphorylation of Thr-319 by CDC28 is required for the interaction with FKH2 and recruitment to promoters.

Its subcellular location is the cytoplasm. It localises to the nucleus. Its function is as follows. Transcription activator involved in G2/M transcription through its association with FKH2. This chain is Nuclear division defective protein 1 (NDD1), found in Saccharomyces cerevisiae (strain ATCC 204508 / S288c) (Baker's yeast).